The following is a 314-amino-acid chain: Aspartate carbamoyltransferase catalytic subunit (314 aa).

Carbamoyl phosphate contacts are provided by Arg-58 and Thr-59. Residue Lys-86 participates in L-aspartate binding. Carbamoyl phosphate is bound by residues Arg-108, His-136, and Gln-139. Positions 169 and 223 each coordinate L-aspartate. Carbamoyl phosphate-binding residues include Gly-264 and Pro-265.

The protein belongs to the aspartate/ornithine carbamoyltransferase superfamily. ATCase family. Heterododecamer (2C3:3R2) of six catalytic PyrB chains organized as two trimers (C3), and six regulatory PyrI chains organized as three dimers (R2).

It carries out the reaction carbamoyl phosphate + L-aspartate = N-carbamoyl-L-aspartate + phosphate + H(+). It functions in the pathway pyrimidine metabolism; UMP biosynthesis via de novo pathway; (S)-dihydroorotate from bicarbonate: step 2/3. Catalyzes the condensation of carbamoyl phosphate and aspartate to form carbamoyl aspartate and inorganic phosphate, the committed step in the de novo pyrimidine nucleotide biosynthesis pathway. The chain is Aspartate carbamoyltransferase catalytic subunit from Opitutus terrae (strain DSM 11246 / JCM 15787 / PB90-1).